Reading from the N-terminus, the 204-residue chain is Nucleoside triphosphate pyrophosphatase (204 aa).

Residue D79 is the Proton acceptor of the active site.

Belongs to the Maf family. Requires a divalent metal cation as cofactor.

The protein resides in the cytoplasm. It carries out the reaction a ribonucleoside 5'-triphosphate + H2O = a ribonucleoside 5'-phosphate + diphosphate + H(+). It catalyses the reaction a 2'-deoxyribonucleoside 5'-triphosphate + H2O = a 2'-deoxyribonucleoside 5'-phosphate + diphosphate + H(+). Nucleoside triphosphate pyrophosphatase. May have a dual role in cell division arrest and in preventing the incorporation of modified nucleotides into cellular nucleic acids. The polypeptide is Nucleoside triphosphate pyrophosphatase (Trichodesmium erythraeum (strain IMS101)).